A 284-amino-acid polypeptide reads, in one-letter code: MTAFFKKPKRYMPLRQREPKIDAPQGLMTKCPSCKYMHYTKQLNENHKVCDCGYHFPLHAQERIDMLVDEGSFERFAGPSVKANPLDFPDYEEKLTKDRKRTGIEEAVVCGKATIDGLPLVVCVMDARFRMGSMGAYVGEAIASAVRTATSLGLPVVLFTASGGARMQEGMVSLMQMANTSIALKEHDEAGLLYIAYLTHPTTGGVSASFAMLGDLNVAEPGALIGFAGRRIIEQTIREKLPENFQTAEFLLESGQLDAVIHREQMRSFLKKMIELHDGGVRHV.

The region spanning 27–284 is the CoA carboxyltransferase N-terminal domain; sequence LMTKCPSCKY…ELHDGGVRHV (258 aa). Residues Cys31, Cys34, Cys50, and Cys52 each coordinate Zn(2+). Residues 31-52 form a C4-type zinc finger; that stretch reads CPSCKYMHYTKQLNENHKVCDC.

The protein belongs to the AccD/PCCB family. Acetyl-CoA carboxylase is a heterohexamer composed of biotin carboxyl carrier protein (AccB), biotin carboxylase (AccC) and two subunits each of ACCase subunit alpha (AccA) and ACCase subunit beta (AccD). The cofactor is Zn(2+).

Its subcellular location is the cytoplasm. It carries out the reaction N(6)-carboxybiotinyl-L-lysyl-[protein] + acetyl-CoA = N(6)-biotinyl-L-lysyl-[protein] + malonyl-CoA. Its pathway is lipid metabolism; malonyl-CoA biosynthesis; malonyl-CoA from acetyl-CoA: step 1/1. Functionally, component of the acetyl coenzyme A carboxylase (ACC) complex. Biotin carboxylase (BC) catalyzes the carboxylation of biotin on its carrier protein (BCCP) and then the CO(2) group is transferred by the transcarboxylase to acetyl-CoA to form malonyl-CoA. The chain is Acetyl-coenzyme A carboxylase carboxyl transferase subunit beta from Exiguobacterium sp. (strain ATCC BAA-1283 / AT1b).